Reading from the N-terminus, the 563-residue chain is RUN and FYVE domain-containing protein 4 (563 aa).

Residues 33–166 enclose the RUN domain; sequence TETSAELHRL…VAFNLDLQRP (134 aa). Disordered stretches follow at residues 176–327 and 375–397; these read SESR…TTEG and KKSS…MQED. Composition is skewed to basic and acidic residues over residues 196–205 and 263–284; these read GFPEEVRCSR and ETER…RKFL. Residues 285–295 are compositionally biased toward polar residues; it reads ENSTASIQQQR. Positions 297-312 are enriched in basic and acidic residues; that stretch reads RAKDVKMQLTGRKVEG. The span at 385–396 shows a compositional bias: polar residues; sequence EWTGVTSGTMQE. A coiled-coil region spans residues 421-462; the sequence is QAQCQEQLRAQEAELQALQEQLSRCQKERALLQVKLEQKQQE. The FYVE-type zinc-finger motif lies at 428–558; sequence LRAQEAELQA…RCCPTCAQQE (131 aa). Zn(2+)-binding residues include cysteine 513, cysteine 516, cysteine 529, cysteine 532, cysteine 537, cysteine 540, cysteine 551, and cysteine 554.

Forms homodimers (via coiled coil domain). Forms a ternary complex with RAB7A and LAMP2; the interaction with RAB7A is mediated by RUFY4 (via RUN and coiled coil domains). Interacts with GTP-, but not GDP-bound ARL8A and ARL8B. Interacts with dynactin/DCTN1 and the dynein intermediate chain DYNC1I1/2. Expressed in dendritic cells.

It is found in the cytoplasmic vesicle. The protein localises to the autophagosome. It localises to the lysosome. Its function is as follows. ARL8 effector that promotes the coupling of endolysosomes to dynein-dynactin for retrograde transport along microtubules. Acts by binding both GTP-bound ARL8 and dynein-dynactin. In nonneuronal cells, promotes concentration of endolysosomes in the juxtanuclear area. In hippocampal neurons, drives retrograde transport of endolysosomes from the axon to the soma. Positive regulator of macroautophagy in dendritic cells. Increases autophagic flux, probably by stimulating both autophagosome formation and facilitating tethering with lysosomes. Binds to phosphatidylinositol 3-phosphate (PtdIns3P) through its FYVE-type zinc finger. Positive regulator of osteosclast bone-resorbing activity, possibly by promoting late endosome-lysosome fusion by acting as an adapter protein between RAB7A on late endosomes and LAMP2 on primary lysosomes. In Mus musculus (Mouse), this protein is RUN and FYVE domain-containing protein 4 (Rufy4).